The following is a 93-amino-acid chain: Conotoxin Mr105 (93 aa).

The N-terminal stretch at 1–22 is a signal peptide; that stretch reads MQRGAVLLGVVALLVLWPQAGA. Positions 23-33 are excised as a propeptide; sequence ELYDVNDPDVR.

The protein belongs to the F superfamily. In terms of processing, contains 4 disulfide bonds. As to expression, expressed by the venom duct.

The protein localises to the secreted. The protein is Conotoxin Mr105 of Conus marmoreus (Marble cone).